The following is a 268-amino-acid chain: Tryptophan synthase alpha chain (268 aa).

Catalysis depends on proton acceptor residues E47 and D58.

The protein belongs to the TrpA family. Tetramer of two alpha and two beta chains.

It localises to the plastid. The protein localises to the chloroplast. It carries out the reaction (1S,2R)-1-C-(indol-3-yl)glycerol 3-phosphate + L-serine = D-glyceraldehyde 3-phosphate + L-tryptophan + H2O. Its pathway is amino-acid biosynthesis; L-tryptophan biosynthesis; L-tryptophan from chorismate: step 5/5. In terms of biological role, the alpha subunit is responsible for the aldol cleavage of indoleglycerol phosphate to indole and glyceraldehyde 3-phosphate. This chain is Tryptophan synthase alpha chain, found in Gracilaria tenuistipitata var. liui (Red alga).